Reading from the N-terminus, the 498-residue chain is Cytochrome P450 monooxygenase idtP (498 aa).

Residues 1–20 (MFLLHILAIGACLLWYFVRS) form the signal peptide. Cys439 contributes to the heme binding site.

It belongs to the cytochrome P450 family. Requires heme as cofactor.

The protein operates within secondary metabolite biosynthesis. Cytochrome P450 monooxygenase; part of the gene cluster that mediates the biosynthesis of paspalitrems, indole-diterpene (IDT) mycotoxins that are potent tremorgens in mammals. The geranylgeranyl diphosphate (GGPP) synthase idtG is proposed to catalyze the first step in IDT biosynthesis via catalysis of a series of iterative condensations of isopentenyl diphosphate (IPP) with dimethylallyl diphosphate (DMAPP), geranyl diphosphate (GPP), and farnesyl diphosphate (FPP), to form GGPP. Condensation of indole-3-glycerol phosphate with GGPP by the prenyltransferase idtC then forms 3-geranylgeranylindole (3-GGI). Epoxidation of the two terminal alkenes of the geranylgeranyl moiety by the FAD-dependent monooxygenase idtM, and cyclization by the terpene cyclase idtB then leads to the production of paspaline. The cytochrome P450 monooxygenase idtP then catalyzes oxidative elimination of the pendant methyl group at C-12 of paspaline and generates the C-10 ketone to yield 13-desoxypaxilline. The cytochrome P450 monooxygenase idtQ may catalyze the C-13 oxidation of 13-desoxypaxilline to afford paxilline. Considering that both paspalicine and paxilline were detected in C.paspali, idtQ also catalyzes the formation of paspalinine from 13-desoxypaxilline via paspalicine as an intermediate. Finally, the alpha-prenyltransferase idtF prenylates paspalinine at the C-20 or the C-21 positions to yield paspalitrems A and C, respectively. The hydroxylation of paspalitrem A at C-32 by a still unknown oxidase affords paspalitrem B. The polypeptide is Cytochrome P450 monooxygenase idtP (Claviceps paspali (Rye ergot fungus)).